The sequence spans 326 residues: Acetyl-coenzyme A carboxylase carboxyl transferase subunit alpha (326 aa).

The CoA carboxyltransferase C-terminal domain maps to lysine 44–glutamate 298.

The protein belongs to the AccA family. As to quaternary structure, acetyl-CoA carboxylase is a heterohexamer composed of biotin carboxyl carrier protein (AccB), biotin carboxylase (AccC) and two subunits each of ACCase subunit alpha (AccA) and ACCase subunit beta (AccD).

The protein localises to the cytoplasm. The catalysed reaction is N(6)-carboxybiotinyl-L-lysyl-[protein] + acetyl-CoA = N(6)-biotinyl-L-lysyl-[protein] + malonyl-CoA. It functions in the pathway lipid metabolism; malonyl-CoA biosynthesis; malonyl-CoA from acetyl-CoA: step 1/1. In terms of biological role, component of the acetyl coenzyme A carboxylase (ACC) complex. First, biotin carboxylase catalyzes the carboxylation of biotin on its carrier protein (BCCP) and then the CO(2) group is transferred by the carboxyltransferase to acetyl-CoA to form malonyl-CoA. This chain is Acetyl-coenzyme A carboxylase carboxyl transferase subunit alpha, found in Trichormus variabilis (strain ATCC 29413 / PCC 7937) (Anabaena variabilis).